Consider the following 2083-residue polypeptide: MDSNRPAVLLFGDVTDPWVDGIDYVYSQAATTPWLRSFLRDLFTVLKVEMRTMDRTLQESFRDCGSFQELAERYRHTGDDFGMAHAMLTYVIRAVVLLETISAEPHLLDSNRPRPELIGVSGGLFSAAVVSVSTNFQSLYDTCLEAGRVWARLCNLTLVKSRAIEERPGTWGWAVLGIPAGKLSQTLEQFQNDMGVPSAKRARVGVTGDRWSTVIGPPSILELVLNECPTLKNLPKNELDIHALQHTLDISNADIDYIVGDSSLLDTPLPQGYRIYGLDDDRPEATYPSWSHLLRASASQTLARPLNIVQAVSKLNAALGTSTHVDFKIMGPSSHAAYIAKVLQTAGREVSLQDRITAKPPTPDSRDGIAIVGMAGKGPGSDDLEEFWDVLLKGLDLHQEVPPDRYDLDEYYSPKHPPAGPGKCTMTCRHGCFMNNPGHFDSKFFHISPREALLMDPAHRLFLMNAYEALEMAGYSDGQTKMTDPTKIATFFGQCNDDWHVVGHRTLGCDAYTLQAVQRAFGPGRLAFQFNWEGPTYALDSACAATSSCIHLACMSLIARDIDMAVAGAANVLSTPHSFTSLSRSGVLSDSGNCKTYRDDADGYCRADFSGAVVLKRLDDAIAHNDNILAVISSSARNHSGNSTSITTSDAAAQERLFHKVLRNARVTPEDISYVEMHGTGTQVGDKAEMGAVSSVFSKRRDGELLPVGAIKANLGHSEAAAGMSSLLKSILMFQKGTIPPQAGMPHTLNPNFPPLHEINIKIPEEPLEFKSVGGKPRRILLNNFDAAGGNACLLLEDYTHTKEREADVRSAHTIVTSARTQASHLLNKQRLLKWLRSNPNTRIEDLAYTTTARRMHHPIRFALTASTTQEAISKLESEIERNTNSPASRHVPVVFVFTGQGSHYAGMGAELYRTSSAFRERVDLCVDICAGNNFAPFVDIITDEGVDVSSKTAAQVQLAVLTLEMALTHFWRLAGIEPAMVMGHSLGEYAALHAAGVLSLADALYLVGHRALILQERCESGSCSMLSVSTSVANVREQLSQLQSSSCGVACINSPSSTVVSGIAEDLAEFQANITAQDAKVRTKTLSIPFAFHSFQMDPILQDYGTIAAGVTFSAPKIPVASTLLGSIVGEPGVFDHDYLVQQTRQPVNFVGGLNAVQSKLSDPLWLEIGPSPVCVSFVRDTLSPSLSKLTHTLQPNTHNWASISKSLAAAYINGVDIDWVALHAPYETNLQLLTLPSYAWDVKDYWITHTDRVTEAVPEQSPVTGSGPLVSTCAQYLVSKSSSPKVQVVFRASISDPGFMELIDGHKMQGIGLCSGSVFCEAAFAAAKYALEYSGRRNVTQPWLTLQKPELLLPLTKKLAGADGSLITTAVMDSPSAHRISVTFKLTSGSESHELGSCIVNFRDPAKTQADWDRVSYFIQARMDEVIKNAKEGPGHRMQPEVFYALFANAVEFSTDFQGVDEAYIAKDFQEAAALVTLPHDPAGTKFTFSPYWGEALVHLAGFMVNGNPSKSPQKTFIVMGFESVEQTVPLVPGKKYMAYTRISKWVKETAYCDAVVFDPETSNIILQCIDLRYQELPRVTWKHVLDGPHGGSSAHGHKAPVQETKKAVEVSRQAVAVAPVQPQPAEVGEDDDDDFDEGLVDAILDSISKATGSDPSEFTDDTIVADLGVDSIMAIEVVATVKEQSGLDLPATFVLEHPTIGDLRRAFGANKPKTSKPQPGSTTPSSSQSSIPSSPNPEPTSMSDTASSLGSSLVDIEKDQTFTPPPELEPKPNHHLGKMDETDTSPAPTVRITLLQGRPSPKRTPFYMMADGTGTIATYIHLPAFKSKMPVYGIDSPFLRCPSRLTKDVGIPGVAKLIVDALVTAQPTGPLMIGGFSAGSIVAYEVTRQLGALGRQVTGLVLIDMCCPRSSLLDEDAMNSEDDASFAIFENAVSKDGLWSLASTTQDHFRAYHVAMHAYHPPYMTAQERPSHTAVIWAEKGMVNRVVGNDRLMQMLADQGIPTTSYPGYMEDPRLGAFACLVPDRTAADLGPNGWEKYTAGEVLALSVAGDHLDLPMPGHVHLLQREMEKAFAYFEGEST.

Positions 9–246 (LLFGDVTDPW…NELDIHALQH (238 aa)) are N-terminal acylcarrier protein transacylase domain (SAT). One can recognise a Ketosynthase family 3 (KS3) domain in the interval 366 to 798 (RDGIAIVGMA…GGNACLLLED (433 aa)). Residues cysteine 543, histidine 678, and histidine 717 each act as for beta-ketoacyl synthase activity in the active site. Positions 895–1201 (VFVFTGQGSH…THTLQPNTHN (307 aa)) are malonyl-CoA:ACP transacylase (MAT) domain. Serine 986 functions as the For acyl/malonyl transferase activity in the catalytic mechanism. The N-terminal hotdog fold stretch occupies residues 1276-1415 (AQYLVSKSSS…DPAKTQADWD (140 aa)). One can recognise a PKS/mFAS DH domain in the interval 1276-1585 (AQYLVSKSSS…YQELPRVTWK (310 aa)). The segment at 1285 to 1581 (SPKVQVVFRA…IDLRYQELPR (297 aa)) is product template (PT) domain. The segment at 1437–1585 (GHRMQPEVFY…YQELPRVTWK (149 aa)) is C-terminal hotdog fold. The 78-residue stretch at 1637 to 1714 (DFDEGLVDAI…DLRRAFGANK (78 aa)) folds into the Carrier domain. O-(pantetheine 4'-phosphoryl)serine is present on serine 1674. Residues 1710–1790 (FGANKPKTSK…KMDETDTSPA (81 aa)) form a disordered region. Residues 1718–1736 (SKPQPGSTTPSSSQSSIPS) are compositionally biased toward low complexity. The segment covering 1745-1754 (MSDTASSLGS) has biased composition (polar residues). Over residues 1771–1784 (LEPKPNHHLGKMDE) the composition is skewed to basic and acidic residues. The interval 1811-2058 (MMADGTGTIA…LSVAGDHLDL (248 aa)) is thioesterase (TE) domain. Histidine 2065 (for thioesterase activity) is an active-site residue.

It participates in mycotoxin biosynthesis. Its function is as follows. Non-reducing polyketide synthase; part of the gene cluster that mediates the biosynthesis of 10,11-dehydrocurvularin, a prevalent fungal phytotoxin with heat shock response and immune-modulatory activities. The highly reducing polyketide synthase curS1 is responsible for biosynthesis up to the tetraketide stage. The non-reducing polyketide synthase curS2 then conducts four additional chain extension cycles, producing the unreduced part of the nascent octaketide from C-1 to C-8 in 10,11-dehydrocurvularin. This is Non-reducing polyketide synthase curS2 from Aspergillus terreus.